Reading from the N-terminus, the 458-residue chain is Maturase-like protein 1 (458 aa).

The protein to group II intron maturases.

The protein resides in the plastid. It is found in the chloroplast. Its function is as follows. Could be required for group III intron excision. The polypeptide is Maturase-like protein 1 (mat1) (Euglena gracilis).